The primary structure comprises 552 residues: MGFDVLLDQAGSLGRFQILQIAFFFVTSMITYTHILLENFTAAIPGHRCWVPLLDNHTTSGNDSDILSQDALLRVSIPLDSNLRPEKCRRFIHPQWQLLYLNGTSPSTNEPDTEPCVDGWVYDQSSFSSTIVTKWDLVCEFQSLKSVVQTLFMSGSLLGGLMFGRLSDRYGRKAIYTWCLLQTAIADTCAIFAPTFVVFCIFRFLAGLTTINIMTNAFILATEWTVPKLQYIGITLILCSYSIGQMLLGGLAFAIRDWYTLHLTVSIPLFVLSLLSRRLVESARWLVTTNQLDEGTKALRRVARINGKKSAGEILTIEFVRSAMQEELNKAQTKTSVIHLLRAPKLRMIICFLSFIRLGASVPFMGLILNLQDLGSSIFLFQVLFGAITFISRCSAHLIMKHMDRRINQSLFFFLVGLCILVNTFLSQEMQTLRVVLATLGIGTVSAANATFFVHALELTPTTFRSTTAGINNVFSRMGSVLAPLLMTLVVYSPHLPWVMYGVFPILAGLIVFCLPETRNRPLPNTIQDVENDTKESRKVKEEDTFIKVTQF.

12 helical membrane-spanning segments follow: residues phenylalanine 16 to leucine 36, leucine 144 to glycine 164, isoleucine 175 to valine 197, isoleucine 201 to leucine 220, isoleucine 232 to alanine 252, isoleucine 255 to leucine 275, isoleucine 349 to leucine 369, leucine 371 to isoleucine 391, isoleucine 407 to serine 427, valine 435 to histidine 455, valine 474 to proline 494, and leucine 496 to proline 516.

Belongs to the major facilitator (TC 2.A.1) superfamily. Organic cation transporter (TC 2.A.1.19) family.

It is found in the cell membrane. It carries out the reaction estrone 3-sulfate(out) + glutarate(in) = estrone 3-sulfate(in) + glutarate(out). The catalysed reaction is 17beta-estradiol 17-O-(beta-D-glucuronate)(out) + glutarate(in) = 17beta-estradiol 17-O-(beta-D-glucuronate)(in) + glutarate(out). It catalyses the reaction taurocholate(out) + glutarate(in) = taurocholate(in) + glutarate(out). The enzyme catalyses 5alpha-androstane-3alpha,17beta-diol 3-O-(beta-D-glucuronate)(out) + glutarate(in) = 5alpha-androstane-3alpha,17beta-diol 3-O-(beta-D-glucuronate)(in) + glutarate(out). It carries out the reaction glycocholate(out) + glutarate(in) = glycocholate(in) + glutarate(out). The catalysed reaction is dehydroepiandrosterone 3-sulfate(out) + glutarate(in) = dehydroepiandrosterone 3-sulfate(in) + glutarate(out). It catalyses the reaction glutarate(in) + succinate(out) = glutarate(out) + succinate(in). Functionally, renal transmembrane organic anion/dicarboxylate exchanger that participates in the reabsorption of conjugated steroids, as well as bile acids, driven by an outward gradient of dicarboxylates such as glutarate or succinate. Transports androstanediol glucuronide (5alpha-androstane-3alpha,17beta-diol 3-O-(beta-D-glucuronate)), estrone 3-sulfate, and estradiol-17-glucuronide (17beta-estradiol 17-O-(beta-D-glucuronate)), and taurocholate. This Oryctolagus cuniculus (Rabbit) protein is Steroid transmembrane transporter SLC22A24.